The following is an 872-amino-acid chain: Alanine--tRNA ligase (872 aa).

Positions 558, 562, 660, and 664 each coordinate Zn(2+).

This sequence belongs to the class-II aminoacyl-tRNA synthetase family. Requires Zn(2+) as cofactor.

Its subcellular location is the cytoplasm. The catalysed reaction is tRNA(Ala) + L-alanine + ATP = L-alanyl-tRNA(Ala) + AMP + diphosphate. Its function is as follows. Catalyzes the attachment of alanine to tRNA(Ala) in a two-step reaction: alanine is first activated by ATP to form Ala-AMP and then transferred to the acceptor end of tRNA(Ala). Also edits incorrectly charged Ser-tRNA(Ala) and Gly-tRNA(Ala) via its editing domain. The protein is Alanine--tRNA ligase of Chlamydia pneumoniae (Chlamydophila pneumoniae).